A 95-amino-acid polypeptide reads, in one-letter code: Small ribosomal subunit protein bS6 (95 aa).

The protein belongs to the bacterial ribosomal protein bS6 family.

Functionally, binds together with bS18 to 16S ribosomal RNA. This chain is Small ribosomal subunit protein bS6, found in Caldanaerobacter subterraneus subsp. tengcongensis (strain DSM 15242 / JCM 11007 / NBRC 100824 / MB4) (Thermoanaerobacter tengcongensis).